A 153-amino-acid chain; its full sequence is Histone H2B.6 (153 aa).

Basic and acidic residues-rich tracts occupy residues 1-28 (MAPK…EKAP) and 36-53 (EKRL…EGKK). Positions 1–60 (MAPKAEKKPAAKKPAEEEPAAEKAEKAPAGKKPKAEKRLPAGKGEKGSGEGKKAGRKKGK) are disordered. Lysine 7 and lysine 37 each carry N6-acetyllysine. Residue lysine 149 forms a Glycyl lysine isopeptide (Lys-Gly) (interchain with G-Cter in ubiquitin) linkage.

Belongs to the histone H2B family. In terms of assembly, the nucleosome is a histone octamer containing two molecules each of H2A, H2B, H3 and H4 assembled in one H3-H4 heterotetramer and two H2A-H2B heterodimers. The octamer wraps approximately 147 bp of DNA. In terms of processing, can be acetylated to form H2BK6ac and H2BK33ac. Monoubiquitinated by BRE1 to form H2BK143ub1 and deubiquitinated by UBP26. Required for heterochromatic histone H3 di- and trimethylation at H3K4me. May give a specific tag for epigenetic transcriptional activation.

The protein resides in the nucleus. It localises to the chromosome. Its function is as follows. Core component of nucleosome. Nucleosomes wrap and compact DNA into chromatin, limiting DNA accessibility to the cellular machineries which require DNA as a template. Histones thereby play a central role in transcription regulation, DNA repair, DNA replication and chromosomal stability. DNA accessibility is regulated via a complex set of post-translational modifications of histones, also called histone code, and nucleosome remodeling. In Oryza sativa subsp. indica (Rice), this protein is Histone H2B.6 (H2B.6).